A 124-amino-acid polypeptide reads, in one-letter code: U33-theraphotoxin-Cg1a (124 aa).

The signal sequence occupies residues 1–17 (MKFAVAIAFTLLVCVFA). Disulfide bonds link Cys26-Cys37, Cys31-Cys51, Cys36-Cys75, Cys61-Cys83, and Cys77-Cys94. Positions 93 to 108 (RCQEESGKSDKSKESQ) are enriched in basic and acidic residues. The interval 93-124 (RCQEESGKSDKSKESQGSDESEESEESKESCG) is disordered. Positions 109–118 (GSDESEESEE) are enriched in acidic residues.

It belongs to the neurotoxin 32 family. As to expression, expressed by the venom gland.

It localises to the secreted. The protein is U33-theraphotoxin-Cg1a of Chilobrachys guangxiensis (Chinese earth tiger tarantula).